Reading from the N-terminus, the 91-residue chain is Cell division protein FtsB (91 aa).

The Cytoplasmic segment spans residues 1 to 3; sequence MRW. Residues 4–21 form a helical membrane-spanning segment; that stretch reads PVIILAVLVVVLQYPLWL. Residues 22 to 91 are Periplasmic-facing; that stretch reads GKGGWLRVWE…EIFVQVPQKH (70 aa). Positions 28–72 form a coiled coil; sequence RVWEVDRKLHEQREENTRLEERNAGLDAEVRDLKSGNEAIEERAR.

Belongs to the FtsB family. Part of a complex composed of FtsB, FtsL and FtsQ.

The protein localises to the cell inner membrane. In terms of biological role, essential cell division protein. May link together the upstream cell division proteins, which are predominantly cytoplasmic, with the downstream cell division proteins, which are predominantly periplasmic. The chain is Cell division protein FtsB from Azoarcus sp. (strain BH72).